The primary structure comprises 124 residues: Schlafen-like protein (124 aa).

Belongs to the Schlafen family. Subgroup poxviridae B3 subfamily.

This Homo sapiens (Human) protein is Schlafen-like protein.